A 383-amino-acid chain; its full sequence is Acetylornithine deacetylase (383 aa).

A Zn(2+)-binding site is contributed by H80. D82 is an active-site residue. D112 provides a ligand contact to Zn(2+). The active site involves E144. Zn(2+) is bound by residues E145, E169, and H355.

This sequence belongs to the peptidase M20A family. ArgE subfamily. As to quaternary structure, homodimer. It depends on Zn(2+) as a cofactor. Co(2+) serves as cofactor. The cofactor is glutathione.

It is found in the cytoplasm. It carries out the reaction N(2)-acetyl-L-ornithine + H2O = L-ornithine + acetate. The protein operates within amino-acid biosynthesis; L-arginine biosynthesis; L-ornithine from N(2)-acetyl-L-ornithine (linear): step 1/1. Catalyzes the hydrolysis of the amide bond of N(2)-acetylated L-amino acids. Cleaves the acetyl group from N-acetyl-L-ornithine to form L-ornithine, an intermediate in L-arginine biosynthesis pathway, and a branchpoint in the synthesis of polyamines. This is Acetylornithine deacetylase from Shigella sonnei (strain Ss046).